Consider the following 203-residue polypeptide: Superoxide dismutase [Mn/Fe] (203 aa).

The Fe(3+) site is built by His-27, His-81, Asp-163, and His-167. His-27, His-81, Asp-163, and His-167 together coordinate Mn(2+).

It belongs to the iron/manganese superoxide dismutase family. Mn(2+) is required as a cofactor. The cofactor is Fe(3+).

It catalyses the reaction 2 superoxide + 2 H(+) = H2O2 + O2. Its function is as follows. Destroys superoxide anion radicals which are normally produced within the cells and which are toxic to biological systems. Catalyzes the dismutation of superoxide anion radicals into O2 and H2O2 by successive reduction and oxidation of the transition metal ion at the active site. This Streptococcus mutans serotype c (strain ATCC 700610 / UA159) protein is Superoxide dismutase [Mn/Fe] (sodA).